The sequence spans 74 residues: ATP synthase subunit c (74 aa).

2 helical membrane passes run 8–28 (FIGI…VSNI) and 52–72 (IGAG…MLLI).

This sequence belongs to the ATPase C chain family. As to quaternary structure, F-type ATPases have 2 components, F(1) - the catalytic core - and F(0) - the membrane proton channel. F(1) has five subunits: alpha(3), beta(3), gamma(1), delta(1), epsilon(1). F(0) has three main subunits: a(1), b(2) and c(10-14). The alpha and beta chains form an alternating ring which encloses part of the gamma chain. F(1) is attached to F(0) by a central stalk formed by the gamma and epsilon chains, while a peripheral stalk is formed by the delta and b chains.

It localises to the cell inner membrane. Functionally, f(1)F(0) ATP synthase produces ATP from ADP in the presence of a proton or sodium gradient. F-type ATPases consist of two structural domains, F(1) containing the extramembraneous catalytic core and F(0) containing the membrane proton channel, linked together by a central stalk and a peripheral stalk. During catalysis, ATP synthesis in the catalytic domain of F(1) is coupled via a rotary mechanism of the central stalk subunits to proton translocation. Key component of the F(0) channel; it plays a direct role in translocation across the membrane. A homomeric c-ring of between 10-14 subunits forms the central stalk rotor element with the F(1) delta and epsilon subunits. The sequence is that of ATP synthase subunit c from Rickettsia felis (strain ATCC VR-1525 / URRWXCal2) (Rickettsia azadi).